We begin with the raw amino-acid sequence, 645 residues long: Threonine--tRNA ligase (645 aa).

One can recognise a TGS domain in the interval 1-61 (MPVITLPDGS…SDDAKLSIIT (61 aa)). Residues 243–534 (DHRKLGKKLD…LIEDTEGAFP (292 aa)) are catalytic. Positions 334, 385, and 511 each coordinate Zn(2+).

This sequence belongs to the class-II aminoacyl-tRNA synthetase family. Homodimer. Requires Zn(2+) as cofactor.

The protein localises to the cytoplasm. The catalysed reaction is tRNA(Thr) + L-threonine + ATP = L-threonyl-tRNA(Thr) + AMP + diphosphate + H(+). Catalyzes the attachment of threonine to tRNA(Thr) in a two-step reaction: L-threonine is first activated by ATP to form Thr-AMP and then transferred to the acceptor end of tRNA(Thr). Also edits incorrectly charged L-seryl-tRNA(Thr). This Marinomonas sp. (strain MWYL1) protein is Threonine--tRNA ligase.